Reading from the N-terminus, the 65-residue chain is Cecropin (65 aa).

Positions 1-23 (MNFVKVLFFISACILIMLSAVSG) are cleaved as a signal peptide.

Belongs to the cecropin family.

Its subcellular location is the secreted. Its function is as follows. Has antibacterial activity. This chain is Cecropin (LOC113514368), found in Galleria mellonella (Greater wax moth).